Here is a 100-residue protein sequence, read N- to C-terminus: uncharacterized protein (100 aa).

A helical transmembrane segment spans residues 28–45 (VFLVFYIITMVKIYIFLI).

The protein resides in the membrane. This is an uncharacterized protein from Saccharomyces cerevisiae (strain ATCC 204508 / S288c) (Baker's yeast).